Here is a 633-residue protein sequence, read N- to C-terminus: Rab11 family-interacting protein 4 (633 aa).

2 EF-hand domains span residues 17–52 (LFLQRLRQVFDACDGDADGFIKVEHFVALGLQFAQG) and 50–85 (AQGDEVKKLAKRLDPNAQGRIGFKDFCHGVLAMKGC). Positions 30, 32, 34, 63, 65, 69, and 74 each coordinate Ca(2+). 2 disordered regions span residues 152 to 182 (SDLDSAMYSTPSSEASDEGRNEDKAGGLGSL) and 218 to 257 (GEGEDIDYSPGSPCPDDESRTNALSDLGSSVPSSAGQTPR). A compositionally biased stretch (polar residues) spans 238 to 254 (TNALSDLGSSVPSSAGQ). A coiled-coil region spans residues 410–613 (AREKGTEIVL…EEINYRLRQY (204 aa)). The region spanning 570–632 (EAKSLFSTQT…DHNPSILEIK (63 aa)) is the FIP-RBD domain.

As to quaternary structure, homodimer. Forms a complex with Rab11 (rab11a or rab11b) and arf6.

It is found in the recycling endosome membrane. It localises to the cleavage furrow. The protein localises to the midbody. The protein resides in the cytoplasmic vesicle. Its function is as follows. Acts as a regulator of endocytic traffic by participating in membrane delivery. Required for the abscission step in cytokinesis, possibly by acting as an 'address tag' delivering recycling endosome membranes to the cleavage furrow during late cytokinesis. This is Rab11 family-interacting protein 4 (rab11fip4) from Xenopus tropicalis (Western clawed frog).